Reading from the N-terminus, the 389-residue chain is Terminal nucleotidyltransferase 5D (389 aa).

The protein belongs to the TENT family. As to expression, restricted to testis.

The enzyme catalyses RNA(n) + ATP = RNA(n)-3'-adenine ribonucleotide + diphosphate. Catalyzes the transfer of one adenosine molecule from an ATP to an mRNA poly(A) tail bearing a 3'-OH terminal group. This is Terminal nucleotidyltransferase 5D from Homo sapiens (Human).